The following is a 282-amino-acid chain: uncharacterized protein (282 aa).

The next 4 helical transmembrane spans lie at 130–150 (WALLCVGIAQIALGTVQGFGL), 170–190 (STSWSIALGVIMVGAALWPSA), 191–211 (AAGLAGVLTAFVAILTGYVIV), and 223–243 (ILTHLPVVIGAVLAIMVWRSA). The disordered stretch occupies residues 263–282 (DNASRGRRRGHLWPTDGSAA).

The protein resides in the cell membrane. This is an uncharacterized protein from Mycobacterium tuberculosis (strain CDC 1551 / Oshkosh).